The primary structure comprises 179 residues: Large ribosomal subunit protein uL6 (179 aa).

The protein belongs to the universal ribosomal protein uL6 family. As to quaternary structure, part of the 50S ribosomal subunit.

Its function is as follows. This protein binds to the 23S rRNA, and is important in its secondary structure. It is located near the subunit interface in the base of the L7/L12 stalk, and near the tRNA binding site of the peptidyltransferase center. In Trichodesmium erythraeum (strain IMS101), this protein is Large ribosomal subunit protein uL6.